The primary structure comprises 155 residues: Aspartate carbamoyltransferase regulatory chain (155 aa).

Zn(2+) contacts are provided by Cys-110, Cys-115, Cys-139, and Cys-142.

This sequence belongs to the PyrI family. Contains catalytic and regulatory chains. It depends on Zn(2+) as a cofactor.

Functionally, involved in allosteric regulation of aspartate carbamoyltransferase. This is Aspartate carbamoyltransferase regulatory chain from Yersinia pseudotuberculosis serotype IB (strain PB1/+).